The sequence spans 641 residues: Chaperone protein DnaK (641 aa).

T199 is modified (phosphothreonine; by autocatalysis). The tract at residues 602–641 (MYADQADQAQQAGGQEEGQAKSADDAVDAEFEEVKDDDKK) is disordered. Positions 604 to 615 (ADQADQAQQAGG) are enriched in low complexity. The segment covering 626 to 641 (DAVDAEFEEVKDDDKK) has biased composition (acidic residues).

Belongs to the heat shock protein 70 family.

In terms of biological role, acts as a chaperone. The chain is Chaperone protein DnaK from Marinobacter nauticus (strain ATCC 700491 / DSM 11845 / VT8) (Marinobacter aquaeolei).